We begin with the raw amino-acid sequence, 137 residues long: Large ribosomal subunit protein uL16 (137 aa).

The disordered stretch occupies residues 1 to 20 (MLQPSNRKYRKDFKGRNRGV). Residues 7–17 (RKYRKDFKGRN) are compositionally biased toward basic residues.

The protein belongs to the universal ribosomal protein uL16 family. As to quaternary structure, part of the 50S ribosomal subunit.

Functionally, binds 23S rRNA and is also seen to make contacts with the A and possibly P site tRNAs. The chain is Large ribosomal subunit protein uL16 from Coxiella burnetii (strain CbuG_Q212) (Coxiella burnetii (strain Q212)).